A 236-amino-acid polypeptide reads, in one-letter code: uncharacterized protein (236 aa).

It localises to the virion. This is an uncharacterized protein from Acanthamoeba polyphaga (Amoeba).